Reading from the N-terminus, the 102-residue chain is Large ribosomal subunit protein bL21 (102 aa).

This sequence belongs to the bacterial ribosomal protein bL21 family. As to quaternary structure, part of the 50S ribosomal subunit. Contacts protein L20.

In terms of biological role, this protein binds to 23S rRNA in the presence of protein L20. The sequence is that of Large ribosomal subunit protein bL21 from Marinomonas sp. (strain MWYL1).